A 455-amino-acid polypeptide reads, in one-letter code: Argininosuccinate lyase (455 aa).

It belongs to the lyase 1 family. Argininosuccinate lyase subfamily.

The protein localises to the cytoplasm. It catalyses the reaction 2-(N(omega)-L-arginino)succinate = fumarate + L-arginine. The protein operates within amino-acid biosynthesis; L-arginine biosynthesis; L-arginine from L-ornithine and carbamoyl phosphate: step 3/3. The polypeptide is Argininosuccinate lyase (Roseiflexus castenholzii (strain DSM 13941 / HLO8)).